A 315-amino-acid polypeptide reads, in one-letter code: Acetyl-coenzyme A carboxylase carboxyl transferase subunit alpha (315 aa).

The CoA carboxyltransferase C-terminal domain occupies 40-293; that stretch reads LQDKSKTLTE…REELSSQLAM (254 aa).

It belongs to the AccA family. As to quaternary structure, acetyl-CoA carboxylase is a heterohexamer composed of biotin carboxyl carrier protein (AccB), biotin carboxylase (AccC) and two subunits each of ACCase subunit alpha (AccA) and ACCase subunit beta (AccD).

The protein resides in the cytoplasm. The catalysed reaction is N(6)-carboxybiotinyl-L-lysyl-[protein] + acetyl-CoA = N(6)-biotinyl-L-lysyl-[protein] + malonyl-CoA. Its pathway is lipid metabolism; malonyl-CoA biosynthesis; malonyl-CoA from acetyl-CoA: step 1/1. Functionally, component of the acetyl coenzyme A carboxylase (ACC) complex. First, biotin carboxylase catalyzes the carboxylation of biotin on its carrier protein (BCCP) and then the CO(2) group is transferred by the carboxyltransferase to acetyl-CoA to form malonyl-CoA. The protein is Acetyl-coenzyme A carboxylase carboxyl transferase subunit alpha of Pseudomonas syringae pv. syringae (strain B728a).